Consider the following 379-residue polypeptide: Carbamoyl phosphate synthase small chain (379 aa).

Positions 1–184 are CPSase; it reads MVSLYLENGL…LDYKPFDEKN (184 aa). L-glutamine-binding residues include S44, G240, and G242. One can recognise a Glutamine amidotransferase type-1 domain in the interval 188–378; sequence TIAVLDFGAK…VKLLENFPTR (191 aa). C268 serves as the catalytic Nucleophile. L269, Q272, N310, and Y313 together coordinate L-glutamine. Active-site residues include H351 and E353.

This sequence belongs to the CarA family. Composed of two chains; the small (or glutamine) chain promotes the hydrolysis of glutamine to ammonia, which is used by the large (or ammonia) chain to synthesize carbamoyl phosphate. Tetramer of heterodimers (alpha,beta)4.

The catalysed reaction is hydrogencarbonate + L-glutamine + 2 ATP + H2O = carbamoyl phosphate + L-glutamate + 2 ADP + phosphate + 2 H(+). It catalyses the reaction L-glutamine + H2O = L-glutamate + NH4(+). Its pathway is amino-acid biosynthesis; L-arginine biosynthesis; carbamoyl phosphate from bicarbonate: step 1/1. The protein operates within pyrimidine metabolism; UMP biosynthesis via de novo pathway; (S)-dihydroorotate from bicarbonate: step 1/3. Its function is as follows. Small subunit of the glutamine-dependent carbamoyl phosphate synthetase (CPSase). CPSase catalyzes the formation of carbamoyl phosphate from the ammonia moiety of glutamine, carbonate, and phosphate donated by ATP, constituting the first step of 2 biosynthetic pathways, one leading to arginine and/or urea and the other to pyrimidine nucleotides. The small subunit (glutamine amidotransferase) binds and cleaves glutamine to supply the large subunit with the substrate ammonia. In Helicobacter acinonychis (strain Sheeba), this protein is Carbamoyl phosphate synthase small chain.